A 223-amino-acid polypeptide reads, in one-letter code: Phosphoribosylformylglycinamidine synthase subunit PurQ (223 aa).

The 221-residue stretch at 3–223 (FAVLVFPGSN…MVKSWREQHV (221 aa)) folds into the Glutamine amidotransferase type-1 domain. The active-site Nucleophile is Cys-85. Residues His-193 and Glu-195 contribute to the active site.

As to quaternary structure, part of the FGAM synthase complex composed of 1 PurL, 1 PurQ and 2 PurS subunits.

The protein localises to the cytoplasm. It carries out the reaction N(2)-formyl-N(1)-(5-phospho-beta-D-ribosyl)glycinamide + L-glutamine + ATP + H2O = 2-formamido-N(1)-(5-O-phospho-beta-D-ribosyl)acetamidine + L-glutamate + ADP + phosphate + H(+). The catalysed reaction is L-glutamine + H2O = L-glutamate + NH4(+). It participates in purine metabolism; IMP biosynthesis via de novo pathway; 5-amino-1-(5-phospho-D-ribosyl)imidazole from N(2)-formyl-N(1)-(5-phospho-D-ribosyl)glycinamide: step 1/2. Part of the phosphoribosylformylglycinamidine synthase complex involved in the purines biosynthetic pathway. Catalyzes the ATP-dependent conversion of formylglycinamide ribonucleotide (FGAR) and glutamine to yield formylglycinamidine ribonucleotide (FGAM) and glutamate. The FGAM synthase complex is composed of three subunits. PurQ produces an ammonia molecule by converting glutamine to glutamate. PurL transfers the ammonia molecule to FGAR to form FGAM in an ATP-dependent manner. PurS interacts with PurQ and PurL and is thought to assist in the transfer of the ammonia molecule from PurQ to PurL. This is Phosphoribosylformylglycinamidine synthase subunit PurQ from Staphylococcus aureus (strain MRSA252).